We begin with the raw amino-acid sequence, 411 residues long: Methyl-CpG-binding domain protein 2 (411 aa).

Residues 1–149 are required for interaction with DHX9 and PRMT5; that stretch reads MRAHPGGGRC…GPRATESGKR (149 aa). A disordered region spans residues 1–158; the sequence is MRAHPGGGRC…RMDCPALPPG (158 aa). A compositionally biased stretch (basic residues) spans 77–95; that stretch reads GRGRGRGRGRGRGRGRGRG. A compositionally biased stretch (gly residues) spans 98–121; the sequence is PSGGSGLGGDGGGCGGGGSGGGGA. The 69-residue stretch at 145–213 folds into the MBD domain; it reads ESGKRMDCPA…SSFDFRTGKM (69 aa). At Ser181 the chain carries Phosphoserine. The disordered stretch occupies residues 214 to 241; it reads MPSKLQKNKQRLRNDPLNQNKGKPDLNT. Positions 229–241 are enriched in polar residues; that stretch reads PLNQNKGKPDLNT. Ser407 bears the Phosphoserine mark.

In terms of assembly, heterodimer with MBD3 (via N-terminus). Component of the MeCP1 complex that contains HDAC1 and HDAC2. Component of the nucleosome remodeling and deacetylase (NuRD) repressor complex, composed of core proteins MTA1, MTA2, MTA3, RBBP4, RBBP7, HDAC1, HDAC2, MBD2, MBD3, and peripherally associated proteins CDK2AP1, CDK2AP2, GATAD2A, GATAD2B, CHD3, CHD4 and CHD5. The exact stoichiometry of the NuRD complex is unknown, and some subunits such as MBD2 and MBD3, GATAD2A and GATAD2B, and CHD3, CHD4 and CHD5 define mutually exclusive NuRD complexes. Interacts with CDK2AP1. Interacts with DHX9. Interacts with DNMT1. Interacts with GATAD2A/p66-alpha. Interacts with GATAD2B/p66-beta. Interacts with GPN1. Interacts with MIZF. Interacts with PRMT5. Interacts with SIN3A. Interacts with SPHK2. As to expression, highly expressed in brain, heart, kidney, stomach, testis and placenta.

The protein resides in the nucleus. Its subcellular location is the chromosome. Its function is as follows. Binds CpG islands in promoters where the DNA is methylated at position 5 of cytosine within CpG dinucleotides. Binds hemimethylated DNA as well. Recruits histone deacetylases and DNA methyltransferases to chromatin. Acts as a component of the histone deacetylase NuRD complex which participates in the remodeling of chromatin. Acts as a transcriptional repressor and plays a role in gene silencing. Functions as a scaffold protein, targeting GATAD2A and GATAD2B to chromatin to promote repression. May enhance the activation of some unmethylated cAMP-responsive promoters. This chain is Methyl-CpG-binding domain protein 2, found in Homo sapiens (Human).